Reading from the N-terminus, the 134-residue chain is Small ribosomal subunit protein uS8c (134 aa).

It belongs to the universal ribosomal protein uS8 family. As to quaternary structure, part of the 30S ribosomal subunit.

It localises to the plastid. The protein localises to the chloroplast. In terms of biological role, one of the primary rRNA binding proteins, it binds directly to 16S rRNA central domain where it helps coordinate assembly of the platform of the 30S subunit. In Arabis hirsuta (Hairy rock-cress), this protein is Small ribosomal subunit protein uS8c (rps8).